Consider the following 404-residue polypeptide: tRNA/tmRNA (uracil-C(5))-methyltransferase (404 aa).

5 residues coordinate S-adenosyl-L-methionine: glutamine 218, tyrosine 251, asparagine 256, glutamate 272, and aspartate 332. The active-site Nucleophile is the cysteine 358. Residue glutamate 392 is the Proton acceptor of the active site.

This sequence belongs to the class I-like SAM-binding methyltransferase superfamily. RNA M5U methyltransferase family. TrmA subfamily.

It catalyses the reaction uridine(54) in tRNA + S-adenosyl-L-methionine = 5-methyluridine(54) in tRNA + S-adenosyl-L-homocysteine + H(+). The catalysed reaction is uridine(341) in tmRNA + S-adenosyl-L-methionine = 5-methyluridine(341) in tmRNA + S-adenosyl-L-homocysteine + H(+). Functionally, dual-specificity methyltransferase that catalyzes the formation of 5-methyluridine at position 54 (m5U54) in all tRNAs, and that of position 341 (m5U341) in tmRNA (transfer-mRNA). The chain is tRNA/tmRNA (uracil-C(5))-methyltransferase from Helicobacter hepaticus (strain ATCC 51449 / 3B1).